The chain runs to 130 residues: Iron-sulfur cluster insertion protein ErpA (130 aa).

Iron-sulfur cluster is bound by residues Cys-46, Cys-116, and Cys-118.

Belongs to the HesB/IscA family. Homodimer. It depends on iron-sulfur cluster as a cofactor.

In terms of biological role, required for insertion of 4Fe-4S clusters for at least IspG. This Legionella pneumophila subsp. pneumophila (strain Philadelphia 1 / ATCC 33152 / DSM 7513) protein is Iron-sulfur cluster insertion protein ErpA.